The primary structure comprises 266 residues: MRKNTYAMRYVAGQPAERILPPGSFASIGQALPAGEPLSNEERIRILVWNIFKQQRAEWLSVLKNYGKDAHLVLLQEAQTTPELVQFATANYLAADQVPAFVLPQHPSGVMTLSAAHPVYCCPLREREPILRLAKSALVTVYPLPDTRLLMVVNVHAVNFSLGVDVYSKQLLPIGDQIAHHSGPVIMAGDFNAWSRPRMNALYRFAREMSLRQVRFTDDQRRRAFGRPLDFVFYRGLNVNEASVLVTRASDHNPLLVEFSPGKPEQ.

It belongs to the UPF0294 family.

Its subcellular location is the cytoplasm. This Salmonella newport (strain SL254) protein is UPF0294 protein YafD.